Reading from the N-terminus, the 402-residue chain is 3-isopropylmalate dehydratase large subunit 2 (402 aa).

Cys280, Cys341, and Cys344 together coordinate [4Fe-4S] cluster.

The protein belongs to the aconitase/IPM isomerase family. LeuC type 2 subfamily. Heterodimer of LeuC and LeuD. Requires [4Fe-4S] cluster as cofactor.

The catalysed reaction is (2R,3S)-3-isopropylmalate = (2S)-2-isopropylmalate. The protein operates within amino-acid biosynthesis; L-leucine biosynthesis; L-leucine from 3-methyl-2-oxobutanoate: step 2/4. In terms of biological role, catalyzes the isomerization between 2-isopropylmalate and 3-isopropylmalate, via the formation of 2-isopropylmaleate. In Methanopyrus kandleri (strain AV19 / DSM 6324 / JCM 9639 / NBRC 100938), this protein is 3-isopropylmalate dehydratase large subunit 2.